Consider the following 1939-residue polypeptide: Myosin-4 (1939 aa).

In terms of domain architecture, Myosin N-terminal SH3-like spans 33–82 (DAKSSVFVVDAKESYVKATVQSREGGKVTAKTEGGATVTVKEDQVFSMNP). Residue Ser-36 is modified to Phosphoserine. A phosphothreonine mark is found at Thr-64 and Thr-69. Residue Ser-79 is modified to Phosphoserine. The Myosin motor domain occupies 86–782 (DKIEDMAMMT…LLGTLEEMRD (697 aa)). Lys-130 carries the N6,N6,N6-trimethyllysine modification. 179 to 186 (GESGAGKT) contacts ATP. At Tyr-389 the chain carries Phosphotyrosine. A Phosphothreonine modification is found at Thr-391. Ser-392 carries the phosphoserine modification. Thr-419 carries the phosphothreonine modification. Tyr-424 is modified (phosphotyrosine). Residue Ser-625 is modified to Phosphoserine. The interval 659 to 681 (LNKLMTNLKSTHPHFVRCLIPNE) is actin-binding. His-757 is subject to Pros-methylhistidine. The interval 761 to 775 (KFGHTKVFFKAGLLG) is actin-binding. Position 776 is a phosphothreonine (Thr-776). The IQ domain maps to 785 to 814 (LAQLITRTQAVCRGYLMRVEFRKMMERRES). Positions 843-1939 (LLKSAETEKE…EVHTKVISEE (1097 aa)) form a coiled coil. Residues Ser-1092 and Ser-1096 each carry the phosphoserine modification. Disordered stretches follow at residues 1128–1147 (AERA…SREL) and 1153–1172 (RLEE…KKRE). Ser-1162 and Ser-1237 each carry phosphoserine. Thr-1241 is modified (phosphothreonine). At Ser-1243 the chain carries Phosphoserine. Position 1255 is a phosphothreonine (Thr-1255). Ser-1261 is subject to Phosphoserine. Phosphothreonine is present on Thr-1265. A Phosphoserine modification is found at Ser-1278. Thr-1286 carries the post-translational modification Phosphothreonine. 5 positions are modified to phosphoserine: Ser-1288, Ser-1292, Ser-1303, Ser-1306, and Ser-1413. Tyr-1464 is modified (phosphotyrosine). Thr-1467 carries the phosphothreonine modification. Ser-1474 is subject to Phosphoserine. At Tyr-1492 the chain carries Phosphotyrosine. Ser-1495 carries the phosphoserine modification. Thr-1501 is modified (phosphothreonine). Ser-1514 is modified (phosphoserine). A Phosphothreonine modification is found at Thr-1517. Phosphoserine occurs at positions 1542, 1547, 1554, 1574, 1600, 1603, 1714, and 1726. Phosphothreonine is present on residues Thr-1730 and Thr-1736. Residue Ser-1739 is modified to Phosphoserine.

It belongs to the TRAFAC class myosin-kinesin ATPase superfamily. Myosin family. In terms of assembly, muscle myosin is a hexameric protein that consists of 2 heavy chain subunits (MHC), 2 alkali light chain subunits (MLC) and 2 regulatory light chain subunits (MLC-2).

The protein resides in the cytoplasm. The protein localises to the myofibril. Its function is as follows. Muscle contraction. The polypeptide is Myosin-4 (Rattus norvegicus (Rat)).